Consider the following 414-residue polypeptide: D-mannose isomerase (414 aa).

Residues His-255 and His-390 each act as proton donor/acceptor in the active site.

It belongs to the N-acylglucosamine 2-epimerase family. In terms of assembly, monomer.

It catalyses the reaction D-mannose = D-fructose. Strongly inhibited by Ag(2+), Cu(2+) and cetyltrimethyl ammonium bromide (CTAB). Catalyzes the reversible isomerization of D-mannose to D-fructose. Shows high specific activity towards mannose and fructose, and has no detectable activity towards other monosaccharides and disaccharides. The chain is D-mannose isomerase from Pseudomonas cannabina pv. alisalensis.